We begin with the raw amino-acid sequence, 210 residues long: Putative Dihydrofolate reductase (210 aa).

Residues 4–184 (TLYCVVAVDT…IFYMFETYIK (181 aa)) enclose the DHFR domain.

Belongs to the dihydrofolate reductase family.

The enzyme catalyses (6S)-5,6,7,8-tetrahydrofolate + NADP(+) = 7,8-dihydrofolate + NADPH + H(+). This chain is Putative Dihydrofolate reductase (ORF2), found in Human herpesvirus 8 type P (isolate GK18) (HHV-8).